The chain runs to 456 residues: Bifunctional protein GlmU (456 aa).

Residues 1–230 (MDKRFAVILA…FQETLGVNDR (230 aa)) are pyrophosphorylase. UDP-N-acetyl-alpha-D-glucosamine-binding positions include 9 to 12 (LAAG), K23, Q73, and 78 to 79 (GT). Residue D103 participates in Mg(2+) binding. UDP-N-acetyl-alpha-D-glucosamine is bound by residues G140, E155, N170, and N228. N228 is a binding site for Mg(2+). Residues 231-251 (VALSQAEMYMKERINKRHMQN) are linker. Positions 252–456 (GVTLIDPMNT…EDYVKNIHKK (205 aa)) are N-acetyltransferase. R333 and K351 together coordinate UDP-N-acetyl-alpha-D-glucosamine. H363 functions as the Proton acceptor in the catalytic mechanism. 2 residues coordinate UDP-N-acetyl-alpha-D-glucosamine: Y366 and N377. Residues 386 to 387 (NY), A423, and R440 contribute to the acetyl-CoA site.

The protein in the N-terminal section; belongs to the N-acetylglucosamine-1-phosphate uridyltransferase family. This sequence in the C-terminal section; belongs to the transferase hexapeptide repeat family. Homotrimer. The cofactor is Mg(2+).

The protein localises to the cytoplasm. It carries out the reaction alpha-D-glucosamine 1-phosphate + acetyl-CoA = N-acetyl-alpha-D-glucosamine 1-phosphate + CoA + H(+). The enzyme catalyses N-acetyl-alpha-D-glucosamine 1-phosphate + UTP + H(+) = UDP-N-acetyl-alpha-D-glucosamine + diphosphate. Its pathway is nucleotide-sugar biosynthesis; UDP-N-acetyl-alpha-D-glucosamine biosynthesis; N-acetyl-alpha-D-glucosamine 1-phosphate from alpha-D-glucosamine 6-phosphate (route II): step 2/2. It functions in the pathway nucleotide-sugar biosynthesis; UDP-N-acetyl-alpha-D-glucosamine biosynthesis; UDP-N-acetyl-alpha-D-glucosamine from N-acetyl-alpha-D-glucosamine 1-phosphate: step 1/1. It participates in bacterial outer membrane biogenesis; LPS lipid A biosynthesis. In terms of biological role, catalyzes the last two sequential reactions in the de novo biosynthetic pathway for UDP-N-acetylglucosamine (UDP-GlcNAc). The C-terminal domain catalyzes the transfer of acetyl group from acetyl coenzyme A to glucosamine-1-phosphate (GlcN-1-P) to produce N-acetylglucosamine-1-phosphate (GlcNAc-1-P), which is converted into UDP-GlcNAc by the transfer of uridine 5-monophosphate (from uridine 5-triphosphate), a reaction catalyzed by the N-terminal domain. The chain is Bifunctional protein GlmU from Bacillus velezensis (strain DSM 23117 / BGSC 10A6 / LMG 26770 / FZB42) (Bacillus amyloliquefaciens subsp. plantarum).